The sequence spans 105 residues: Integration host factor (105 aa).

Positions 64–71 (LPKVGKVK) match the H2TH motif, binds DNA motif. Residues 82 to 94 (APTRRLRGLGDRQ) are lid, binds DNA.

Belongs to the actinobacterial IHF (aIHF) family. In terms of assembly, homodimer in solution. Binds DNA as a monomer.

It is found in the cytoplasm. In terms of biological role, a nucleoid-associated protein (NAP) required for septum formation and normal cell division as well as for DNA segregation. Binds about 135 sites across the chromosome, most of which are genes involved in virulence; most DNA-binding sites are immediately upstream of transcription start sites. When mIHF is depleted most of the genes are down-regulated. Binds supercoiled and linear dsDNA in a concentration-dependent manner, probably non-sequence specifically. Binding compacts DNA, protecting it from degradation. Initial binding to supercoiled DNA opens it fully, followed by bending and compaction. Bends and thus compacts linear DNA. Binds DNA via 2 sites, forms left-handed loops on linear DNA; at low concentrations unwinds larger cosmids (42.6 kb) then collapses and condenses DNA as protein levels rise. Forms mostly left-handed loops on condensing cosmid DNA. The sequence is that of Integration host factor from Mycobacterium tuberculosis (strain ATCC 25618 / H37Rv).